The primary structure comprises 312 residues: Olfactory receptor 5p57 (312 aa).

Residues 1–25 (MEPGNYTVVTEFILLGLTDDITVSV) lie on the Extracellular side of the membrane. An N-linked (GlcNAc...) asparagine glycan is attached at Asn-5. A helical membrane pass occupies residues 26-46 (ILFVMFLIVYSVTLMGNLNII). Residues 47–54 (VLIRTSPQ) are Cytoplasmic-facing. The chain crosses the membrane as a helical span at residues 55 to 75 (LHTPMYLFLSHLAFLDIGYSS). Residues 76–99 (SVTPIMLRGFLRKGTFIPVAGCVA) are Extracellular-facing. Cys-97 and Cys-189 are oxidised to a cystine. A helical transmembrane segment spans residues 100–120 (QLCIVVAFGTSESFLLASMAY). At 121 to 133 (DRYVAICSPLLYS) the chain is on the cytoplasmic side. Residues 134 to 154 (TQMSSTVCILLVGTSYLGGWV) form a helical membrane-spanning segment. At 155-196 (NAWIFTGCSLNLSFCGPNKINHFFCDYSPLLKLSCSHDFSFE) the chain is on the extracellular side. N-linked (GlcNAc...) asparagine glycosylation is present at Asn-165. A helical transmembrane segment spans residues 197 to 217 (VIPAISSGSIIVVTVFIIALS). Over 218-237 (YVYILVSILKMRSTEGRQKA) the chain is Cytoplasmic. The chain crosses the membrane as a helical span at residues 238–258 (FSTCTSHLTAVTLFFGTITFI). Residues 259-271 (YVMPQSSYSTDQN) are Extracellular-facing. Residues 272-292 (KVVSVFYTVVIPMLNPLIYSF) form a helical membrane-spanning segment. Over 293–312 (RNKEVKEAMKKLIAKTHWWS) the chain is Cytoplasmic.

This sequence belongs to the G-protein coupled receptor 1 family.

Its subcellular location is the cell membrane. Its function is as follows. Probable odorant receptor, which recognizes only aliphatic alcohols, suggesting that it may convey a 'woody' or 'sweet' sour. In Mus musculus (Mouse), this protein is Olfactory receptor 5p57.